The primary structure comprises 315 residues: Homoserine O-succinyltransferase (315 aa).

Cys142 functions as the Acyl-thioester intermediate in the catalytic mechanism. Substrate contacts are provided by Lys163 and Ser192. The active-site Proton acceptor is the His235. Glu237 is an active-site residue. Substrate is bound at residue Arg249.

Belongs to the MetA family.

The protein localises to the cytoplasm. The catalysed reaction is L-homoserine + succinyl-CoA = O-succinyl-L-homoserine + CoA. Its pathway is amino-acid biosynthesis; L-methionine biosynthesis via de novo pathway; O-succinyl-L-homoserine from L-homoserine: step 1/1. In terms of biological role, transfers a succinyl group from succinyl-CoA to L-homoserine, forming succinyl-L-homoserine. This Shewanella piezotolerans (strain WP3 / JCM 13877) protein is Homoserine O-succinyltransferase.